Reading from the N-terminus, the 190-residue chain is Nucleoside triphosphate pyrophosphatase (190 aa).

The active-site Proton acceptor is Asp69.

It belongs to the Maf family. The cofactor is a divalent metal cation.

It localises to the cytoplasm. It catalyses the reaction a ribonucleoside 5'-triphosphate + H2O = a ribonucleoside 5'-phosphate + diphosphate + H(+). The catalysed reaction is a 2'-deoxyribonucleoside 5'-triphosphate + H2O = a 2'-deoxyribonucleoside 5'-phosphate + diphosphate + H(+). Functionally, nucleoside triphosphate pyrophosphatase. May have a dual role in cell division arrest and in preventing the incorporation of modified nucleotides into cellular nucleic acids. In Helicobacter pylori (strain G27), this protein is Nucleoside triphosphate pyrophosphatase.